We begin with the raw amino-acid sequence, 730 residues long: Replication restart protein PriA (730 aa).

Residues 212-378 (LLFHSGFNVW…QNGKYQHLVL (167 aa)) form the Helicase ATP-binding domain. 225–232 (GVTGSGKT) is an ATP binding site. The DEAH box motif lies at 321 to 324 (DEEH). 8 residues coordinate Zn(2+): cysteine 437, cysteine 440, cysteine 446, cysteine 449, cysteine 464, cysteine 467, cysteine 477, and cysteine 480. Positions 472–640 (TIPRQCGDCG…LPPFTFQALI (169 aa)) constitute a Helicase C-terminal domain.

This sequence belongs to the helicase family. PriA subfamily. As to quaternary structure, component of the replication restart primosome. Requires Zn(2+) as cofactor.

It carries out the reaction Couples ATP hydrolysis with the unwinding of duplex DNA by translocating in the 3'-5' direction.. The catalysed reaction is ATP + H2O = ADP + phosphate + H(+). Functionally, initiates the restart of stalled replication forks, which reloads the replicative helicase on sites other than the origin of replication. Recognizes and binds to abandoned replication forks and remodels them to uncover a helicase loading site. Promotes assembly of the primosome at these replication forks. The sequence is that of Replication restart protein PriA from Haemophilus influenzae (strain ATCC 51907 / DSM 11121 / KW20 / Rd).